The sequence spans 386 residues: Methionine aminopeptidase 1 (386 aa).

Position 2 is an N-acetylalanine (alanine 2). The segment at 6–59 (TRVCETDGCSSEAKLQCPTCIKLGIQGSYFCSQECFKGSWATHKLLHKKAKDEK) adopts a C6H2-type zinc-finger fold. Zn(2+) is bound by residues cysteine 9, cysteine 14, cysteine 22, cysteine 25, cysteine 36, cysteine 40, histidine 48, and histidine 52. Histidine 203 contacts a protein. Residues aspartate 220, aspartate 231, and histidine 294 each contribute to the Zn(2+) site. Histidine 301 serves as a coordination point for a protein. Residues glutamate 327 and glutamate 358 each coordinate Zn(2+).

Belongs to the peptidase M24A family. Methionine aminopeptidase type 1 subfamily. In terms of assembly, associates with the 60S ribosomal subunit of the 80S translational complex. Requires Zn(2+) as cofactor. Co(2+) serves as cofactor. It depends on Mn(2+) as a cofactor. Fe(2+) is required as a cofactor.

The protein resides in the cytoplasm. The catalysed reaction is Release of N-terminal amino acids, preferentially methionine, from peptides and arylamides.. In terms of biological role, cotranslationally removes the N-terminal methionine from nascent proteins. The N-terminal methionine is often cleaved when the second residue in the primary sequence is small and uncharged (Met-Ala-, Cys, Gly, Pro, Ser, Thr, or Val). Required for normal progression through the cell cycle. This is Methionine aminopeptidase 1 (METAP1) from Homo sapiens (Human).